The following is a 158-amino-acid chain: Transcription elongation factor GreA (158 aa).

Belongs to the GreA/GreB family.

Functionally, necessary for efficient RNA polymerase transcription elongation past template-encoded arresting sites. The arresting sites in DNA have the property of trapping a certain fraction of elongating RNA polymerases that pass through, resulting in locked ternary complexes. Cleavage of the nascent transcript by cleavage factors such as GreA or GreB allows the resumption of elongation from the new 3'terminus. GreA releases sequences of 2 to 3 nucleotides. This Macrococcus caseolyticus (strain JCSC5402) (Macrococcoides caseolyticum) protein is Transcription elongation factor GreA.